A 1125-amino-acid polypeptide reads, in one-letter code: tRNA (34-2'-O)-methyltransferase regulator WDR6 (1125 aa).

N-acetylmethionine is present on Met-1. WD repeat units lie at residues 53–97 (VKRV…VVKV), 105–143 (RELWRSGLWNMSDWIWDVRWIEGNVAVALGHNSVVLYDP), 147–189 (CMLQ…IWYP), 200–238 (APDRRVSGHVGVIFSMSYLESKGLLATASEDRSVRLWKV), 247–285 (RVQNIGHCFGHSARVWQVKLLENYLISAGEDCVCLVWSH), 289–327 (ILQAFRGHRGRGIRAIATHERQAWVVTGGDDSGIRLWHL), 335–376 (LGVS…LYDL), 381–422 (WEQL…VVPI), 425–470 (PTAA…ISAA), 476–520 (IFVK…LFPV), 559–598 (PVSTLHSLHGKQGVTSVTCHGGYLYSTGRDSSYFQLFVHG), 604–642 (VLRQKACRGMNWVAGLRMVPDGSMVILGFHANEFVVWSP), 645–684 (HEKLHIVNCGGGHRSWAFSDTEAAMAFTYLKDGEVMLYRA), 739–785 (LIDI…VWAV), 848–897 (RNKH…LFLL), 905–950 (HLLA…FWDL), 974–1016 (GTPS…VFTL), 1040–1077 (EEYSVPCAHAAHVTGVKILSPKLMVSASIDQRLTFWRL), and 1083–1125 (TFMN…NWYD).

The protein belongs to the WD repeat WDR6 family. In terms of assembly, interacts with FTSJ1; the interaction is direct, and required for 2'-O-methylation of position 34 in substrate tRNAs. Interacts with IRS4. Interacts with STK11/LKB1.

It localises to the cytoplasm. Functionally, together with methyltransferase FTSJ1, methylates the 2'-O-ribose of nucleotides at position 34 of the tRNA anticodon loop of substrate tRNAs. Required for the correct positioning of the substrate tRNA for methylation. Required to suppress amino acid starvation-induced autophagy. Enhances the STK11/LKB1-induced cell growth suppression activity. The sequence is that of tRNA (34-2'-O)-methyltransferase regulator WDR6 (Wdr6) from Mus musculus (Mouse).